The sequence spans 424 residues: Insertion element IS2A uncharacterized 48.2 kDa protein (424 aa).

The Integrase catalytic domain maps to 229-412 (KPAVPPSKRA…SPREYLRHGA (184 aa)).

This sequence belongs to the transposase 8 family.

The protein is Insertion element IS2A uncharacterized 48.2 kDa protein of Escherichia coli.